The following is an 83-amino-acid chain: Cytochrome b559 subunit alpha (83 aa).

Residues 21 to 35 traverse the membrane as a helical segment; the sequence is VIHSITIPSLFIAGW. Position 23 (H23) interacts with heme.

It belongs to the PsbE/PsbF family. In terms of assembly, heterodimer of an alpha subunit and a beta subunit. PSII is composed of 1 copy each of membrane proteins PsbA, PsbB, PsbC, PsbD, PsbE, PsbF, PsbH, PsbI, PsbJ, PsbK, PsbL, PsbM, PsbT, PsbX, PsbY, PsbZ, Psb30/Ycf12, at least 3 peripheral proteins of the oxygen-evolving complex and a large number of cofactors. It forms dimeric complexes. The cofactor is heme b.

It localises to the plastid. Its subcellular location is the chloroplast thylakoid membrane. In terms of biological role, this b-type cytochrome is tightly associated with the reaction center of photosystem II (PSII). PSII is a light-driven water:plastoquinone oxidoreductase that uses light energy to abstract electrons from H(2)O, generating O(2) and a proton gradient subsequently used for ATP formation. It consists of a core antenna complex that captures photons, and an electron transfer chain that converts photonic excitation into a charge separation. This chain is Cytochrome b559 subunit alpha, found in Tupiella akineta (Green alga).